Reading from the N-terminus, the 146-residue chain is Extracellular globin-2A (146 aa).

A Globin domain is found at His4–Asp146. A disulfide bridge connects residues Cys5 and Cys134. His97 contributes to the heme b binding site.

Belongs to the globin family. In terms of assembly, disulfide bonded trimer of chains IIA, IIB, and IIC.

The protein is Extracellular globin-2A of Tylorrhynchus heterochetus (Japanese palolo worm).